The primary structure comprises 124 residues: CLAVATA3/ESR (CLE)-related protein 45 (124 aa).

A signal peptide spans 1 to 20; that stretch reads MLGSSTRSMFFLLVCIGLLA. 2 N-linked (GlcNAc...) asparagine glycosylation sites follow: Asn25 and Asn96. Positions 71-109 form a coiled coil; that stretch reads LNKNRRVLEEVNKDKIKAEETQERKNKTEDSFKSSKRRV. The span at 87-103 shows a compositional bias: basic and acidic residues; it reads KAEETQERKNKTEDSFK. A disordered region spans residues 87–124; it reads KAEETQERKNKTEDSFKSSKRRVRRGSDPIHNKAQPFS.

Belongs to the CLV3/ESR signal peptide family. As to quaternary structure, binds to SKM1 present in the pollen grain, particularly under relatively high temperature (at 30 degrees Celsius). Interacts with BAM3, especially in roots. As to expression, expressed at low levels in flowers, especially in pistils. Present in vascular tissues. In roots, confined to protophloem and sieve element precursor cells.

The protein localises to the secreted. It localises to the extracellular space. Extracellular signal peptide that regulates cell fate. Represses root apical meristem maintenance. Represses protophloem differentiation in a BAM3-dependent manner. BRX, BAM3, and CLE45 act together to regulate the transition of protophloem cells from proliferation to differentiation, thus impinging on postembryonic growth capacity of the root meristem; this signaling pathway requires CRN and CLV2 and involves MAKR5 for its transduction/amplification. Triggers the accumulation of MAKR5 in developing sieve elements in a BAM3-dependent manner. Prevents, in a dose-dependent manner, auxin response in the root meristem thus leading in the repression of protophloem differentiation and periclinal sieve element precursor cell division. Promotes pollen tube growth prolongation in a SKM1 and SKM2-dependent manner, especially under relatively high temperature (at 30 degrees Celsius), thus conferring tolerance against high temperature probably through the maintenance of mitochondrial activity. Alleviates mitochondrial decay pollen tube in vitro culture. This is CLAVATA3/ESR (CLE)-related protein 45 from Arabidopsis thaliana (Mouse-ear cress).